Consider the following 175-residue polypeptide: Peptide deformylase (175 aa).

Positions 96 and 138 each coordinate Fe cation. The active site involves Glu139. His142 contributes to the Fe cation binding site.

It belongs to the polypeptide deformylase family. The cofactor is Fe(2+).

It carries out the reaction N-terminal N-formyl-L-methionyl-[peptide] + H2O = N-terminal L-methionyl-[peptide] + formate. Removes the formyl group from the N-terminal Met of newly synthesized proteins. Requires at least a dipeptide for an efficient rate of reaction. N-terminal L-methionine is a prerequisite for activity but the enzyme has broad specificity at other positions. This Rhodopseudomonas palustris (strain ATCC BAA-98 / CGA009) protein is Peptide deformylase.